Reading from the N-terminus, the 156-residue chain is ATP synthase subunit b (156 aa).

The helical transmembrane segment at 11–31 threads the bilayer; the sequence is AIAFFIFVVFCMKYVWPPLMA.

Belongs to the ATPase B chain family. As to quaternary structure, F-type ATPases have 2 components, F(1) - the catalytic core - and F(0) - the membrane proton channel. F(1) has five subunits: alpha(3), beta(3), gamma(1), delta(1), epsilon(1). F(0) has three main subunits: a(1), b(2) and c(10-14). The alpha and beta chains form an alternating ring which encloses part of the gamma chain. F(1) is attached to F(0) by a central stalk formed by the gamma and epsilon chains, while a peripheral stalk is formed by the delta and b chains.

The protein localises to the cell inner membrane. F(1)F(0) ATP synthase produces ATP from ADP in the presence of a proton or sodium gradient. F-type ATPases consist of two structural domains, F(1) containing the extramembraneous catalytic core and F(0) containing the membrane proton channel, linked together by a central stalk and a peripheral stalk. During catalysis, ATP synthesis in the catalytic domain of F(1) is coupled via a rotary mechanism of the central stalk subunits to proton translocation. Functionally, component of the F(0) channel, it forms part of the peripheral stalk, linking F(1) to F(0). In Aeromonas hydrophila subsp. hydrophila (strain ATCC 7966 / DSM 30187 / BCRC 13018 / CCUG 14551 / JCM 1027 / KCTC 2358 / NCIMB 9240 / NCTC 8049), this protein is ATP synthase subunit b.